The chain runs to 297 residues: HTH-type transcriptional regulator ArgP (297 aa).

The HTH lysR-type domain maps to 4–60; that stretch reads PDYRTLQALDAVIRERGFERAAQKLCITQSAVSQRIKQLENLFGQPLLVRTVPPRPT. A DNA-binding region (H-T-H motif) is located at residues 21–40; the sequence is FERAAQKLCITQSAVSQRIK.

Belongs to the LysR transcriptional regulatory family. As to quaternary structure, homodimer.

Functionally, controls the transcription of genes involved in arginine and lysine metabolism. The sequence is that of HTH-type transcriptional regulator ArgP from Yersinia enterocolitica serotype O:8 / biotype 1B (strain NCTC 13174 / 8081).